We begin with the raw amino-acid sequence, 458 residues long: Histidine--tRNA ligase (458 aa).

Belongs to the class-II aminoacyl-tRNA synthetase family. In terms of assembly, homodimer.

Its subcellular location is the cytoplasm. It catalyses the reaction tRNA(His) + L-histidine + ATP = L-histidyl-tRNA(His) + AMP + diphosphate + H(+). This is Histidine--tRNA ligase from Azobacteroides pseudotrichonymphae genomovar. CFP2.